Consider the following 1551-residue polypeptide: Envelopment polyprotein (1551 aa).

A signal peptide spans 1–17 (MSKRVLIIAVVVYLVFT). At 18–546 (TQNQITGNHT…CRMSSRPTVA (529 aa)) the chain is on the lumenal side. The segment at 24–66 (GNHTTINSSSPSTTEASSTPTVSRTPQTTTTSTAVSTTITATT) is disordered. N-linked (GlcNAc...) asparagine; by host glycosylation is found at asparagine 25 and asparagine 30. Residues 31-66 (SSSPSTTEASSTPTVSRTPQTTTTSTAVSTTITATT) are compositionally biased toward low complexity. Asparagine 80, asparagine 142, and asparagine 413 each carry an N-linked (GlcNAc...) asparagine; by host glycan. A helical membrane pass occupies residues 547 to 567 (LLLGIWIGCGYILTCIFSFLL). Topologically, residues 568–675 (YHLILFFANC…ISVGIFLKRT (108 aa)) are cytoplasmic. Residues 676–696 (TWLVVLLVLLGLAISPVQGAP) traverse the membrane as a helical segment. The Lumenal segment spans residues 697–704 (TEVSNVKQ). A helical transmembrane segment spans residues 705 to 725 (DGDYSICYFIFGCLVTAALLL). The Cytoplasmic portion of the chain corresponds to 726–823 (KVKRTNSNGI…REKLFTTGLQ (98 aa)). Residues 824 to 844 (LFINKTNVVVFALIMCFLLLL) form a helical membrane-spanning segment. Residues 845-1451 (TGHNASAFDS…GDFFKHYIGS (607 aa)) lie on the Lumenal side of the membrane. Residues asparagine 848, asparagine 1201, asparagine 1258, and asparagine 1420 are each glycosylated (N-linked (GlcNAc...) asparagine; by host). Cysteines 1023 and 1216 form a disulfide. Residues 1452–1472 (IAVGVLGTVLPFALLILFFIY) form a helical membrane-spanning segment. The Cytoplasmic portion of the chain corresponds to 1473 to 1551 (GDKMLWPFKV…KKEKKLSEIA (79 aa)).

This sequence belongs to the nairovirus envelope glycoprotein family. As to quaternary structure, heterodimer with glycoprotein C; in prefusion state. Heterodimer with glycoprotein N; in prefusion state. Homotrimeric; in postfusion state. Specific enzymatic cleavage by host MBTPS1/S1P/SKI-1 endopeptidase yield glycoprotein N. Specific enzymatic cleavages by host furin-like protease and MBTPS1/S1P endopeptidase yield GP38. In terms of processing, glycosylated.

Its subcellular location is the host endoplasmic reticulum membrane. It is found in the virion membrane. The protein localises to the host Golgi apparatus membrane. Functionally, glycoprotein N and glycoprotein C interact with each other and are present at the surface of the virion. Glycoprotein N probably locks the Gn-Gc complex in a prefusion state. Glycoprotein N and glycoprotein C are able to attach the virion to host cell receptors. This attachment induces virion internalization predominantly through clathrin-dependent endocytosis. Its function is as follows. Glycoprotein C and glycoprotein N interact with each other and are present at the surface of the virion. The spikes at the surface of the virion are formed by an N-terminal extension of glycoprotein C. Glycoprotein N and glycoprotein C are able to attach the virion to host cell receptors. This attachment induces virion internalization predominantly through clathrin-dependent endocytosis. Class II fusion protein that promotes fusion of viral membrane with host endosomal membrane after endocytosis of the virion. Exposure to potassium is necessary for the conformational change leading to fusion. The polypeptide is Envelopment polyprotein (GP) (Amblyomma variegatum (Tropical bont tick)).